A 190-amino-acid polypeptide reads, in one-letter code: Translation machinery-associated protein 22 (190 aa).

The tract at residues 63–83 is disordered; sequence LNVSGTKDSNAEEQPAKLTKE. The region spanning 99-170 is the SUI1 domain; sequence VLIKTIERTK…DIFDFILEKF (72 aa).

This sequence belongs to the DENR family. In terms of assembly, interacts with the 40S ribosomal subunit.

It localises to the cytoplasm. The chain is Translation machinery-associated protein 22 (tma22) from Schizosaccharomyces pombe (strain 972 / ATCC 24843) (Fission yeast).